Reading from the N-terminus, the 157-residue chain is MSRRRGKVEPRHIEGDPKYNDKVISKFINCLMVDGKKSVAESVFYDALEVIAKKTGQDPFAVFQEALENAKPQVEVKSRRVGGVTYQVPIEVRPERRLALGIRWLIKYSRGRNEKSMKNKLAAEFMEAQKGTGSAIKKKEDIRKMADANKAFSHYRW.

This sequence belongs to the universal ribosomal protein uS7 family. In terms of assembly, part of the 30S ribosomal subunit. Contacts proteins S9 and S11.

In terms of biological role, one of the primary rRNA binding proteins, it binds directly to 16S rRNA where it nucleates assembly of the head domain of the 30S subunit. Is located at the subunit interface close to the decoding center, probably blocks exit of the E-site tRNA. The sequence is that of Small ribosomal subunit protein uS7 from Leptospira biflexa serovar Patoc (strain Patoc 1 / Ames).